We begin with the raw amino-acid sequence, 109 residues long: B melanoma antigen 3 (109 aa).

Residues 1 to 17 (MAAGVVFLALSAQLLQA) form the signal peptide.

Belongs to the BAGE family. Not expressed in normal tissues except in testis. Expressed in melanoma, bladder and lung carcinomas.

The protein resides in the secreted. Functionally, unknown. Candidate gene encoding tumor antigens. The polypeptide is B melanoma antigen 3 (BAGE3) (Homo sapiens (Human)).